Consider the following 646-residue polypeptide: Lipoteichoic acid synthase (646 aa).

Topologically, residues 1–7 (MSLPKKK) are cytoplasmic. Residues 8–28 (IGIFAFFLLTVFTITLKTYFS) form a helical membrane-spanning segment. The Extracellular portion of the chain corresponds to 29–43 (YYVDFSLGVKGLVQN). The helical transmembrane segment at 44–64 (LILLMNPYSLIALVLSVFLFF) threads the bilayer. At 65–68 (KGKK) the chain is on the cytoplasmic side. A helical membrane pass occupies residues 69–89 (AFWFIFIGGFLLTFLLYANVV). The Extracellular portion of the chain corresponds to 90-119 (YFRFFSDFLTFSTLNQAGNVESMGGAVSAS). The chain crosses the membrane as a helical span at residues 120–140 (FKWYDFVYFIDTIIYLAILIF). Topologically, residues 141–153 (KRKWLDNRAFSKK) are cytoplasmic. A helical transmembrane segment spans residues 154–174 (FVPVVMATSVALFFLNLAFAE). The Extracellular portion of the chain corresponds to 175–646 (TDRPELLTRT…KSGPKGNEKK (472 aa)). Residues Glu-255 and Thr-300 each coordinate Mn(2+). Thr-300 is a catalytic residue. His-416 provides a ligand contact to substrate. Mn(2+) contacts are provided by Asp-475 and His-476.

The protein belongs to the LTA synthase family. Post-translationally, proteolytically cleaved.

It localises to the cell membrane. Its subcellular location is the secreted. It participates in cell wall biogenesis; lipoteichoic acid biosynthesis. Catalyzes the polymerization of lipoteichoic acid (LTA) polyglycerol phosphate, a reaction that presumably uses phosphatidylglycerol (PG) as substrate. Is required for staphylococcal growth and cell division process. In Staphylococcus epidermidis (strain ATCC 35984 / DSM 28319 / BCRC 17069 / CCUG 31568 / BM 3577 / RP62A), this protein is Lipoteichoic acid synthase (ltaS).